The chain runs to 465 residues: Glutamate--tRNA ligase 2 (465 aa).

The short motif at 8–18 (PSPTGLMHLGN) is the 'HIGH' region element. The short motif at 249–253 (PLSKR) is the 'KMSKS' region element. Lys-252 lines the ATP pocket.

The protein belongs to the class-I aminoacyl-tRNA synthetase family. Glutamate--tRNA ligase type 1 subfamily. As to quaternary structure, monomer.

Its subcellular location is the cytoplasm. The catalysed reaction is tRNA(Glu) + L-glutamate + ATP = L-glutamyl-tRNA(Glu) + AMP + diphosphate. Its function is as follows. Catalyzes the attachment of glutamate to tRNA(Glu) in a two-step reaction: glutamate is first activated by ATP to form Glu-AMP and then transferred to the acceptor end of tRNA(Glu). This Coxiella burnetii (strain RSA 331 / Henzerling II) protein is Glutamate--tRNA ligase 2.